The primary structure comprises 465 residues: tRNA modification GTPase MnmE (465 aa).

Positions 21, 85, and 124 each coordinate (6S)-5-formyl-5,6,7,8-tetrahydrofolate. In terms of domain architecture, TrmE-type G spans 220 to 387 (GVPVAIIGET…LQQRLVAAAH (168 aa)). A K(+)-binding site is contributed by asparagine 230. GTP-binding positions include 230-235 (NAGKST), 249-255 (SDIHGTT), and 274-277 (DTAG). Position 234 (serine 234) interacts with Mg(2+). Residues serine 249, isoleucine 251, and threonine 254 each coordinate K(+). Threonine 255 contributes to the Mg(2+) binding site. Lysine 465 provides a ligand contact to (6S)-5-formyl-5,6,7,8-tetrahydrofolate.

It belongs to the TRAFAC class TrmE-Era-EngA-EngB-Septin-like GTPase superfamily. TrmE GTPase family. As to quaternary structure, homodimer. Heterotetramer of two MnmE and two MnmG subunits. K(+) is required as a cofactor.

It is found in the cytoplasm. In terms of biological role, exhibits a very high intrinsic GTPase hydrolysis rate. Involved in the addition of a carboxymethylaminomethyl (cmnm) group at the wobble position (U34) of certain tRNAs, forming tRNA-cmnm(5)s(2)U34. This is tRNA modification GTPase MnmE from Bacteroides fragilis (strain ATCC 25285 / DSM 2151 / CCUG 4856 / JCM 11019 / LMG 10263 / NCTC 9343 / Onslow / VPI 2553 / EN-2).